The sequence spans 422 residues: L-threonine dehydratase biosynthetic IlvA (422 aa).

Residue Lys-56 is modified to N6-(pyridoxal phosphate)lysine. Residues Asn-83, Gly-189 to Leu-193, and Ser-315 contribute to the pyridoxal 5'-phosphate site. Residues His-339–Glu-413 form the ACT-like domain.

This sequence belongs to the serine/threonine dehydratase family. In terms of assembly, homotetramer. Requires pyridoxal 5'-phosphate as cofactor.

The enzyme catalyses L-threonine = 2-oxobutanoate + NH4(+). It participates in amino-acid biosynthesis; L-isoleucine biosynthesis; 2-oxobutanoate from L-threonine: step 1/1. Catalyzes the anaerobic formation of alpha-ketobutyrate and ammonia from threonine in a two-step reaction. The first step involved a dehydration of threonine and a production of enamine intermediates (aminocrotonate), which tautomerizes to its imine form (iminobutyrate). Both intermediates are unstable and short-lived. The second step is the nonenzymatic hydrolysis of the enamine/imine intermediates to form 2-ketobutyrate and free ammonia. In the low water environment of the cell, the second step is accelerated by RidA. This chain is L-threonine dehydratase biosynthetic IlvA (ilvA), found in Staphylococcus aureus (strain NCTC 8325 / PS 47).